We begin with the raw amino-acid sequence, 378 residues long: Secreted LysM effector ldpA (378 aa).

The signal sequence occupies residues 1–19 (MMKSIRFLASALALCLVDA). Over residues 118–131 (WTPPTTTTRSTSSS) the composition is skewed to low complexity. A disordered region spans residues 118-139 (WTPPTTTTRSTSSSAGNGVTTP). One can recognise a LysM 1 domain in the interval 152-198 (RFYLVVSGDSCYDIAAAQGISLDNFYTWNPAVGSSCGGLWPDYYVCV). Residues 208–230 (TTTTTTTPTTTSTTTTTAGNGVT) form a disordered region. LysM domains follow at residues 245-291 (KFYQ…YVCV) and 330-376 (KFYL…YVCV).

The protein belongs to the secreted LysM effector family.

It is found in the secreted. The protein localises to the cell wall. Its subcellular location is the extracellular space. The protein resides in the extracellular matrix. Functionally, cell wall chitin of A.fumigatus recruits lung eosinophils during infection and ldpA might have a role in sequestration of chitin and act as triggers of host immunity to dampen host defense. This Aspergillus fumigatus (strain ATCC MYA-4609 / CBS 101355 / FGSC A1100 / Af293) (Neosartorya fumigata) protein is Secreted LysM effector ldpA.